A 208-amino-acid polypeptide reads, in one-letter code: Ribosomal RNA small subunit methyltransferase G (208 aa).

S-adenosyl-L-methionine is bound by residues Gly73, Leu78, 127–128, and Arg141; that span reads VE.

Belongs to the methyltransferase superfamily. RNA methyltransferase RsmG family.

It is found in the cytoplasm. It catalyses the reaction guanosine(527) in 16S rRNA + S-adenosyl-L-methionine = N(7)-methylguanosine(527) in 16S rRNA + S-adenosyl-L-homocysteine. Its function is as follows. Specifically methylates the N7 position of guanine in position 527 of 16S rRNA. In Cereibacter sphaeroides (strain ATCC 17025 / ATH 2.4.3) (Rhodobacter sphaeroides), this protein is Ribosomal RNA small subunit methyltransferase G.